Here is a 101-residue protein sequence, read N- to C-terminus: Small ribosomal subunit protein uS17 (101 aa).

This sequence belongs to the universal ribosomal protein uS17 family. As to quaternary structure, part of the 30S ribosomal subunit.

One of the primary rRNA binding proteins, it binds specifically to the 5'-end of 16S ribosomal RNA. The sequence is that of Small ribosomal subunit protein uS17 from Kosmotoga olearia (strain ATCC BAA-1733 / DSM 21960 / TBF 19.5.1).